The primary structure comprises 82 residues: Small ribosomal subunit protein uS17 (82 aa).

Belongs to the universal ribosomal protein uS17 family. Part of the 30S ribosomal subunit.

Functionally, one of the primary rRNA binding proteins, it binds specifically to the 5'-end of 16S ribosomal RNA. In Shewanella sp. (strain MR-7), this protein is Small ribosomal subunit protein uS17.